The following is a 57-amino-acid chain: uncharacterized protein (57 aa).

The helical transmembrane segment at 34–54 (AALLDAAALVVIPGLLTAAAV) threads the bilayer.

It localises to the membrane. This is an uncharacterized protein from Dictyostelium discoideum (Social amoeba).